A 199-amino-acid chain; its full sequence is Protein MM_0484 (199 aa).

An AMMECR1 domain is found at 5–196 (TEGRAAVKLA…EKEPDGEVIE (192 aa)).

The sequence is that of Protein MM_0484 from Methanosarcina mazei (strain ATCC BAA-159 / DSM 3647 / Goe1 / Go1 / JCM 11833 / OCM 88) (Methanosarcina frisia).